The chain runs to 417 residues: Solanesyl diphosphate synthase 2, chloroplastic (417 aa).

Residues 1–60 (MMMSCRNIDLGTSVLDHSCSSSSTSRRFLFGNSSKTVCMIGGRSCVGNLVFLRRDLATCR) constitute a chloroplast transit peptide. Isopentenyl diphosphate contacts are provided by lysine 137, arginine 140, and histidine 175. Residues aspartate 182 and aspartate 186 each coordinate Mg(2+). Arginine 191 contacts an all-trans-polyprenyl diphosphate. Arginine 192 contacts isopentenyl diphosphate. Lysine 268, threonine 269, glutamine 306, and lysine 323 together coordinate an all-trans-polyprenyl diphosphate.

It belongs to the FPP/GGPP synthase family. Homodimer. Interacts with FBN5. Requires Mg(2+) as cofactor. Higher expression in leaves than in roots.

It is found in the plastid. The protein resides in the chloroplast. The catalysed reaction is 5 isopentenyl diphosphate + (2E,6E,10E)-geranylgeranyl diphosphate = all-trans-nonaprenyl diphosphate + 5 diphosphate. Involved in providing solanesyl diphosphate for plastoquinone-9 (PQ-9) formation in plastids. Catalyzes the elongation of the prenyl side chain of PQ-9 in plastids. Contributes to the biosynthesis of plastochromanol-8 (PC-8) in plastids. Does not contribute to the synthesis of tocopherol or ubiquinone. PQ-9 and PC-8 are lipophilic antioxidants that act as protectant against photooxidative stress under high light stress conditions. Prefers geranylgeranyl diphosphate to farnesyl diphosphate as substrate. No activity with geranyl diphosphate or dimethylallyl diphosphate as substrate. This Arabidopsis thaliana (Mouse-ear cress) protein is Solanesyl diphosphate synthase 2, chloroplastic.